Consider the following 70-residue polypeptide: UPF0434 protein MCA0634 (70 aa).

The protein belongs to the UPF0434 family.

The chain is UPF0434 protein MCA0634 from Methylococcus capsulatus (strain ATCC 33009 / NCIMB 11132 / Bath).